We begin with the raw amino-acid sequence, 194 residues long: Holliday junction branch migration complex subunit RuvA (194 aa).

A domain I region spans residues 1–64 (MISRLTGKLV…EDAHLLFGFA (64 aa)). The tract at residues 65-143 (TAEERKTFRQ…AHAVTDGLFA (79 aa)) is domain II. A flexible linker region spans residues 144-147 (AAPA). The domain III stretch occupies residues 147–194 (AADETEDIVGTLLALGYSEREAKAAVKGVPKGTDVGEGVRLALKNLLK).

It belongs to the RuvA family. Homotetramer. Forms an RuvA(8)-RuvB(12)-Holliday junction (HJ) complex. HJ DNA is sandwiched between 2 RuvA tetramers; dsDNA enters through RuvA and exits via RuvB. An RuvB hexamer assembles on each DNA strand where it exits the tetramer. Each RuvB hexamer is contacted by two RuvA subunits (via domain III) on 2 adjacent RuvB subunits; this complex drives branch migration. In the full resolvosome a probable DNA-RuvA(4)-RuvB(12)-RuvC(2) complex forms which resolves the HJ.

The protein localises to the cytoplasm. The RuvA-RuvB-RuvC complex processes Holliday junction (HJ) DNA during genetic recombination and DNA repair, while the RuvA-RuvB complex plays an important role in the rescue of blocked DNA replication forks via replication fork reversal (RFR). RuvA specifically binds to HJ cruciform DNA, conferring on it an open structure. The RuvB hexamer acts as an ATP-dependent pump, pulling dsDNA into and through the RuvAB complex. HJ branch migration allows RuvC to scan DNA until it finds its consensus sequence, where it cleaves and resolves the cruciform DNA. The protein is Holliday junction branch migration complex subunit RuvA of Neisseria meningitidis serogroup C / serotype 2a (strain ATCC 700532 / DSM 15464 / FAM18).